We begin with the raw amino-acid sequence, 155 residues long: MKYKFRNVVLGGTFDTLHSGHVKLLATATLIGDRILIGLTSDSFASTYKQYKVRPFSVRLANLRNLMSLIAPEREVAYVEIHDPYGPAVFDPRLEAIVASIETAPRALQINDERAKRGLRPMEVFIISTVRDGYGHTLSSTYIRRVLERPESKQS.

Belongs to the eukaryotic CoaD family.

Its subcellular location is the cytoplasm. It catalyses the reaction (R)-4'-phosphopantetheine + ATP + H(+) = 3'-dephospho-CoA + diphosphate. It participates in cofactor biosynthesis; coenzyme A biosynthesis. Reversibly transfers an adenylyl group from ATP to 4'-phosphopantetheine, yielding dephospho-CoA (dPCoA) and pyrophosphate. This is Phosphopantetheine adenylyltransferase from Pyrobaculum aerophilum (strain ATCC 51768 / DSM 7523 / JCM 9630 / CIP 104966 / NBRC 100827 / IM2).